A 343-amino-acid chain; its full sequence is Hydroxymethylglutaryl-CoA synthase (343 aa).

Residues D28 and A29 each coordinate (3S)-3-hydroxy-3-methylglutaryl-CoA. Catalysis depends on E80, which acts as the Proton donor/acceptor. A (3S)-3-hydroxy-3-methylglutaryl-CoA-binding site is contributed by C112. The active-site Acyl-thioester intermediate is the C112. A CoA-binding site is contributed by R198. 2 residues coordinate (3S)-3-hydroxy-3-methylglutaryl-CoA: T200 and H233. Catalysis depends on H233, which acts as the Proton donor/acceptor. CoA is bound at residue K238. (3S)-3-hydroxy-3-methylglutaryl-CoA contacts are provided by R242, N265, and S295.

This sequence belongs to the thiolase-like superfamily. Archaeal HMG-CoA synthase family. As to quaternary structure, interacts with acetoacetyl-CoA thiolase that catalyzes the precedent step in the pathway and with a DUF35 protein. The acetoacetyl-CoA thiolase/HMG-CoA synthase complex channels the intermediate via a fused CoA-binding site, which allows for efficient coupling of the endergonic thiolase reaction with the exergonic HMGCS reaction.

The enzyme catalyses acetoacetyl-CoA + acetyl-CoA + H2O = (3S)-3-hydroxy-3-methylglutaryl-CoA + CoA + H(+). It functions in the pathway metabolic intermediate biosynthesis; (R)-mevalonate biosynthesis; (R)-mevalonate from acetyl-CoA: step 2/3. In terms of biological role, catalyzes the condensation of acetyl-CoA with acetoacetyl-CoA to form 3-hydroxy-3-methylglutaryl-CoA (HMG-CoA). Functions in the mevalonate (MVA) pathway leading to isopentenyl diphosphate (IPP), a key precursor for the biosynthesis of isoprenoid compounds that are building blocks of archaeal membrane lipids. The polypeptide is Hydroxymethylglutaryl-CoA synthase (Archaeoglobus fulgidus (strain ATCC 49558 / DSM 4304 / JCM 9628 / NBRC 100126 / VC-16)).